We begin with the raw amino-acid sequence, 118 residues long: Small ribosomal subunit protein uS13 (118 aa).

Residues 93–118 (RGLPVRGQRTKTNARTRKGPRKPIRK) form a disordered region.

This sequence belongs to the universal ribosomal protein uS13 family. In terms of assembly, part of the 30S ribosomal subunit. Forms a loose heterodimer with protein S19. Forms two bridges to the 50S subunit in the 70S ribosome.

In terms of biological role, located at the top of the head of the 30S subunit, it contacts several helices of the 16S rRNA. In the 70S ribosome it contacts the 23S rRNA (bridge B1a) and protein L5 of the 50S subunit (bridge B1b), connecting the 2 subunits; these bridges are implicated in subunit movement. Contacts the tRNAs in the A and P-sites. In Pseudomonas paraeruginosa (strain DSM 24068 / PA7) (Pseudomonas aeruginosa (strain PA7)), this protein is Small ribosomal subunit protein uS13.